The sequence spans 244 residues: Ras-related protein Rab-12 (244 aa).

At methionine 1 the chain carries N-acetylmethionine. Residues 1-10 are compositionally biased toward low complexity; the sequence is MDPGAALQRR. The segment at 1 to 37 is disordered; the sequence is MDPGAALQRRAGGGGGLGAGSPALSGGQGRRRKQPPR. Residues serine 21 and serine 25 each carry the phosphoserine modification. Glycine 52 contributes to the GDP binding site. Residues glycine 52, valine 53, glycine 54, lysine 55, and threonine 56 each coordinate GTP. The GDP site is built by glycine 54, lysine 55, threonine 56, and serine 57. Position 56 (threonine 56) interacts with Mg(2+). 2 short sequence motifs (switch) span residues 65-79 and 97-114; these read DTFC…GVDF and DTAG…YYRS. GTP-binding residues include serine 73 and threonine 74. Mg(2+) is bound by residues threonine 74 and aspartate 97. Position 100 (glycine 100) interacts with GTP. Residue serine 106 is modified to Phosphoserine; by LRRK2. GDP contacts are provided by asparagine 155, lysine 156, aspartate 158, and cysteine 159. 3 residues coordinate GTP: asparagine 155, lysine 156, and aspartate 158. 3 residues coordinate GTP: serine 186, alanine 187, and lysine 188. 2 residues coordinate GDP: alanine 187 and lysine 188. The segment at 225-244 is disordered; sequence QPEPEIPPELPPPRPHVRCC. The span at 228-238 shows a compositional bias: pro residues; it reads PEIPPELPPPR. 2 S-geranylgeranyl cysteine lipidation sites follow: cysteine 243 and cysteine 244.

The protein belongs to the small GTPase superfamily. Rab family. In terms of assembly, interacts with RABIF. Interacts with OPTN. Interacts with LRRK2; interaction facilitates phosphorylation of Ser-106. Interacts with GDI1, GDI2, CHM and CHML; these interactions are disrupted by phosphorylation on Ser-106. Interacts with RILPL1 and RILPL2; these interactions are dependent on phosphorylation of Ser-106. The cofactor is Mg(2+). Post-translationally, phosphorylation of Ser-106 in the switch II region by LRRK2 prevents the association of RAB regulatory proteins, including CHM, CHML and RAB GDP dissociation inhibitors GDI1 and GDI2.

The protein localises to the recycling endosome membrane. It is found in the lysosome membrane. It localises to the golgi apparatus membrane. The protein resides in the cytoplasmic vesicle. Its subcellular location is the autophagosome. It carries out the reaction GTP + H2O = GDP + phosphate + H(+). Its activity is regulated as follows. Regulated by guanine nucleotide exchange factors (GEFs) including DENND3 which promote the exchange of bound GDP for free GTP. Regulated by GTPase activating proteins (GAPs) which increase the GTP hydrolysis activity. Inhibited by GDP dissociation inhibitors (GDIs). Functionally, the small GTPases Rab are key regulators of intracellular membrane trafficking, from the formation of transport vesicles to their fusion with membranes. Rabs cycle between an inactive GDP-bound form and an active GTP-bound form that is able to recruit to membranes different sets of downstream effectors directly responsible for vesicle formation, movement, tethering and fusion. RAB12 may play a role in protein transport from recycling endosomes to lysosomes regulating, for instance, the degradation of the transferrin receptor. Involved in autophagy. The chain is Ras-related protein Rab-12 from Homo sapiens (Human).